The following is a 360-amino-acid chain: BLOC-1-related complex subunit 6 (360 aa).

A disordered region spans residues 1–201 (MEAAQGRLGP…TGAGGGRRAT (201 aa)). A compositionally biased stretch (polar residues) spans 23-33 (ATFSGRPSRTP). Thr-41 carries the post-translational modification Phosphothreonine. Ser-130 carries the phosphoserine modification. Positions 144–155 (EGDDDDDEDEEA) are enriched in acidic residues. Ser-173 is modified (phosphoserine). The segment covering 179-198 (GACGGGGSSSSGETGAGGGR) has biased composition (gly residues). Thr-201 carries the phosphothreonine modification. Ser-204 carries the phosphoserine modification.

Belongs to the BORCS6 family. As to quaternary structure, component of the BLOC-one-related complex (BORC) which is composed of BLOC1S1, BLOC1S2, BORCS5, BORCS6, BORCS7, BORCS8, KXD1 and SNAPIN.

It localises to the lysosome membrane. Functionally, as part of the BORC complex may play a role in lysosomes movement and localization at the cell periphery. Associated with the cytosolic face of lysosomes, the BORC complex may recruit ARL8B and couple lysosomes to microtubule plus-end-directed kinesin motor. This is BLOC-1-related complex subunit 6 from Mus musculus (Mouse).